We begin with the raw amino-acid sequence, 315 residues long: L-lactate dehydrogenase (315 aa).

NAD(+)-binding positions include Val-14, Asp-35, Tyr-67, and 81–82; that span reads GV. Residues Gln-84, Arg-91, and 123–126 each bind substrate; that span reads NPVD. NAD(+)-binding positions include 121-123 and Ser-146; that span reads ASN. Substrate is bound at residue 151 to 154; sequence DSAR. The Proton acceptor role is filled by His-178. Position 219 is a phosphotyrosine (Tyr-219). Thr-228 lines the substrate pocket.

It belongs to the LDH/MDH superfamily. LDH family. As to quaternary structure, homotetramer.

The protein resides in the cytoplasm. The enzyme catalyses (S)-lactate + NAD(+) = pyruvate + NADH + H(+). It participates in fermentation; pyruvate fermentation to lactate; (S)-lactate from pyruvate: step 1/1. In terms of biological role, catalyzes the conversion of lactate to pyruvate. The polypeptide is L-lactate dehydrogenase (Malacoplasma penetrans (strain HF-2) (Mycoplasma penetrans)).